A 255-amino-acid chain; its full sequence is Taurine import ATP-binding protein TauB (255 aa).

The ABC transporter domain occupies 2 to 229; the sequence is LQISHLYADY…RFVAGESSRS (228 aa). ATP is bound at residue 34–41; the sequence is GPSGCGKT.

The protein belongs to the ABC transporter superfamily. Taurine importer (TC 3.A.1.17.1) family. As to quaternary structure, the complex is composed of two ATP-binding proteins (TauB), two transmembrane proteins (TauC) and a solute-binding protein (TauA).

The protein resides in the cell inner membrane. It carries out the reaction taurine(out) + ATP + H2O = taurine(in) + ADP + phosphate + H(+). Part of the ABC transporter complex TauABC involved in taurine import. Responsible for energy coupling to the transport system. The protein is Taurine import ATP-binding protein TauB of Escherichia coli O6:K15:H31 (strain 536 / UPEC).